A 236-amino-acid chain; its full sequence is Small ribosomal subunit protein uS3 (236 aa).

The KH type-2 domain maps to 39-107; that stretch reads IRKFLKREMY…EVFINIKEAK (69 aa). The span at 214-229 shows a compositional bias: basic and acidic residues; it reads PEKKEESKSGDKEVRS. Residues 214-236 form a disordered region; the sequence is PEKKEESKSGDKEVRSKSRRGRQ.

The protein belongs to the universal ribosomal protein uS3 family. As to quaternary structure, part of the 30S ribosomal subunit. Forms a tight complex with proteins S10 and S14.

Functionally, binds the lower part of the 30S subunit head. Binds mRNA in the 70S ribosome, positioning it for translation. The polypeptide is Small ribosomal subunit protein uS3 (Helicobacter hepaticus (strain ATCC 51449 / 3B1)).